Consider the following 214-residue polypeptide: Probable GTP-binding protein EngB (214 aa).

The EngB-type G domain occupies 24–199 (GGYEVAFAGR…RGIVGGWLGL (176 aa)). GTP contacts are provided by residues 32–39 (GRSNAGKS), 59–63 (GRTQQ), 77–80 (DLPG), 144–147 (TKAD), and 178–180 (YSG). Positions 39 and 61 each coordinate Mg(2+).

The protein belongs to the TRAFAC class TrmE-Era-EngA-EngB-Septin-like GTPase superfamily. EngB GTPase family. Requires Mg(2+) as cofactor.

Functionally, necessary for normal cell division and for the maintenance of normal septation. The protein is Probable GTP-binding protein EngB of Xanthomonas axonopodis pv. citri (strain 306).